The chain runs to 466 residues: Secreted RxLR effector protein 101 (466 aa).

A signal peptide spans 1–21 (MRGAYSVITALLVVASSQIAA). The RxLR-dEER signature appears at 48–63 (RYLRGSQHVHDSNEER). Disordered stretches follow at residues 99-127 (KMPHAATAGKKVSRVTRTGKKMTSHGANA) and 384-405 (RTFNGNTDTASLPSKRSKVRSS). Residues 109-121 (KVSRVTRTGKKMT) show a composition bias toward basic residues. The span at 385 to 395 (TFNGNTDTASL) shows a compositional bias: polar residues.

The protein belongs to the RxLR effector family.

The protein localises to the secreted. Its subcellular location is the host nucleus. Functionally, secreted effector that partially suppresses the host cell death induced by cell death-inducing proteins. The protein is Secreted RxLR effector protein 101 of Plasmopara viticola (Downy mildew of grapevine).